The following is a 254-amino-acid chain: 5-oxoprolinase subunit A (254 aa).

It belongs to the LamB/PxpA family. Forms a complex composed of PxpA, PxpB and PxpC.

It catalyses the reaction 5-oxo-L-proline + ATP + 2 H2O = L-glutamate + ADP + phosphate + H(+). Catalyzes the cleavage of 5-oxoproline to form L-glutamate coupled to the hydrolysis of ATP to ADP and inorganic phosphate. In Burkholderia thailandensis (strain ATCC 700388 / DSM 13276 / CCUG 48851 / CIP 106301 / E264), this protein is 5-oxoprolinase subunit A.